The primary structure comprises 467 residues: Glutamate--tRNA ligase (467 aa).

The 'HIGH' region signature appears at 9–19 (PSPTGYLHIGG). Residues 237–241 (KLSKR) carry the 'KMSKS' region motif. Residue K240 participates in ATP binding.

The protein belongs to the class-I aminoacyl-tRNA synthetase family. Glutamate--tRNA ligase type 1 subfamily. As to quaternary structure, monomer.

The protein localises to the cytoplasm. The catalysed reaction is tRNA(Glu) + L-glutamate + ATP = L-glutamyl-tRNA(Glu) + AMP + diphosphate. Its function is as follows. Catalyzes the attachment of glutamate to tRNA(Glu) in a two-step reaction: glutamate is first activated by ATP to form Glu-AMP and then transferred to the acceptor end of tRNA(Glu). This is Glutamate--tRNA ligase from Xanthomonas axonopodis pv. citri (strain 306).